Consider the following 78-residue polypeptide: U7-lycotoxin-Ls1d (78 aa).

Positions 1–22 (MKLIIFTGLALLLIVSLIDVEA) are cleaved as a signal peptide. A propeptide spanning residues 23 to 26 (QNEG) is cleaved from the precursor.

Belongs to the neurotoxin 19 (CSTX) family. 07 (U7-Lctx) subfamily. Post-translationally, contains 4 disulfide bonds. Expressed by the venom gland.

The protein localises to the secreted. This is U7-lycotoxin-Ls1d from Lycosa singoriensis (Wolf spider).